A 554-amino-acid polypeptide reads, in one-letter code: Chaperonin GroEL (554 aa).

ATP-binding positions include 30 to 33 (TLGP), lysine 51, 87 to 91 (DGTTT), glycine 416, and aspartate 503.

It belongs to the chaperonin (HSP60) family. In terms of assembly, forms a cylinder of 14 subunits composed of two heptameric rings stacked back-to-back. Interacts with the co-chaperonin GroES.

Its subcellular location is the cytoplasm. The enzyme catalyses ATP + H2O + a folded polypeptide = ADP + phosphate + an unfolded polypeptide.. Its function is as follows. Together with its co-chaperonin GroES, plays an essential role in assisting protein folding. The GroEL-GroES system forms a nano-cage that allows encapsulation of the non-native substrate proteins and provides a physical environment optimized to promote and accelerate protein folding. The chain is Chaperonin GroEL from Holospora obtusa.